The primary structure comprises 325 residues: Aldo-keto reductase family 1 member A1 (325 aa).

Alanine 2 bears the N-acetylalanine mark. A Phosphoserine modification is found at serine 4. NADP(+) contacts are provided by residues 11–20 (GQKMPLIGLG), threonine 21, tryptophan 22, and aspartate 45. Residue tyrosine 50 is the Proton donor of the active site. Lysine 127 carries the N6-acetyllysine; alternate modification. Lysine 127 is modified (N6-succinyllysine; alternate). Residue lysine 145 is modified to N6-succinyllysine. Serine 162, asparagine 163, serine 211, leucine 213, serine 215, serine 216, lysine 263, serine 264, valine 265, threonine 266, arginine 269, glutamine 272, and asparagine 273 together coordinate NADP(+). The residue at position 211 (serine 211) is a Phosphoserine.

Belongs to the aldo/keto reductase family. Monomer.

Its subcellular location is the cytoplasm. It is found in the cytosol. The protein resides in the apical cell membrane. The enzyme catalyses a primary alcohol + NADP(+) = an aldehyde + NADPH + H(+). It carries out the reaction glycerol + NADP(+) = D-glyceraldehyde + NADPH + H(+). The catalysed reaction is glycerol + NADP(+) = L-glyceraldehyde + NADPH + H(+). It catalyses the reaction L-gulonate + NADP(+) = aldehydo-D-glucuronate + NADPH + H(+). The enzyme catalyses L-gulono-1,4-lactone + NADP(+) = D-glucurono-3,6-lactone + NADPH + H(+). It carries out the reaction allyl alcohol + NADP(+) = acrolein + NADPH + H(+). The catalysed reaction is hydroxyacetone + NADP(+) = methylglyoxal + NADPH + H(+). It catalyses the reaction 3-deoxyfructose + NADP(+) = 3-deoxyglucosone + NADPH + H(+). The enzyme catalyses (R)-mevalonate + NADP(+) = (R)-mevaldate + NADPH + H(+). It carries out the reaction pyridine 3-methanol + NADP(+) = pyridine-3-carbaldehyde + NADPH + H(+). The catalysed reaction is S-nitroso-CoA + NADPH + H(+) = sulfinamide-CoA + NADP(+). It catalyses the reaction S-nitrosoglutathione + NADPH + H(+) = S-(hydroxysulfenamide)glutathione + NADP(+). Its function is as follows. Catalyzes the NADPH-dependent reduction of a wide variety of carbonyl-containing compounds to their corresponding alcohols. Displays enzymatic activity towards endogenous metabolites such as aromatic and aliphatic aldehydes, ketones, monosaccharides and bile acids, with a preference for negatively charged substrates, such as glucuronate and succinic semialdehyde. Plays an important role in ascorbic acid biosynthesis by catalyzing the reduction of D-glucuronic acid and D-glucurono-gamma-lactone. Functions as a detoxifiying enzyme by reducing a range of toxic aldehydes. Reduces methylglyoxal and 3-deoxyglucosone, which are present at elevated levels under hyperglycemic conditions and are cytotoxic. Involved also in the detoxification of lipid-derived aldehydes like acrolein. Plays a role in the activation of procarcinogens, such as polycyclic aromatic hydrocarbon trans-dihydrodiols, and in the metabolism of various xenobiotics and drugs. Also acts as an inhibitor of protein S-nitrosylation by mediating degradation of S-nitroso-coenzyme A (S-nitroso-CoA), a cofactor required to S-nitrosylate proteins. S-nitroso-CoA reductase activity is involved in reprogramming intermediary metabolism in renal proximal tubules, notably by inhibiting protein S-nitrosylation of isoform 2 of PKM (PKM2). Also acts as a S-nitroso-glutathione reductase by catalyzing the NADPH-dependent reduction of S-nitrosoglutathione. Displays no reductase activity towards retinoids. In Sus scrofa (Pig), this protein is Aldo-keto reductase family 1 member A1 (AKR1A1).